Reading from the N-terminus, the 388-residue chain is Nitric oxide reductase FlRd-NAD(+) reductase (388 aa).

The protein belongs to the FAD-dependent oxidoreductase family. FAD is required as a cofactor.

It is found in the cytoplasm. It carries out the reaction 2 reduced [nitric oxide reductase rubredoxin domain] + NAD(+) + H(+) = 2 oxidized [nitric oxide reductase rubredoxin domain] + NADH. It functions in the pathway nitrogen metabolism; nitric oxide reduction. Functionally, one of at least two accessory proteins for anaerobic nitric oxide (NO) reductase. Reduces the rubredoxin moiety of NO reductase. This chain is Nitric oxide reductase FlRd-NAD(+) reductase, found in Aeromonas hydrophila subsp. hydrophila (strain ATCC 7966 / DSM 30187 / BCRC 13018 / CCUG 14551 / JCM 1027 / KCTC 2358 / NCIMB 9240 / NCTC 8049).